The chain runs to 637 residues: MASRTEHADLSDLSGDSGFKRIATISLAALGVVFGDIGTSPLYAIRECFHGDYSIPVSQQNVLGVLSLIFWALVLIVSLKYLTFIMKADNEGEGGILALTALIVAHSKKNRHERWFLVGIGLFGASLLYGDGMITPAISVLSAVEGLQIIAPAFKDLVIPITVIILTGLFLYQHNGTARVGALFGPVILLWFAVIGVLGLVEIVRYPEILRAVLPWYGFSFLLNNHLQGFMVLGAVFLSVTGAEALYADMGHFGKTPIRFTWILFVLPALLLNYFGQGALLLFAPQESHHPFYGLVPSWAMIPMVILATSATIIASQALITGVFSLTQQAIQLGYLPRITVKHTSAGHRGQIYVPGANWALMYATIGLVIGFGSSSKLAAAYGVAVTATMLISTILFYYVARDIWRWNKLATNLLVSFFFVIDLAFFGASATKLFHGAWFPLVIGLVLFTLMLTWKQGRSLLLQQIKDRTLTVEEFVQSLALQQPQRVTGQAVYLTANPDVIPIALLHNLRHNKILHSEVALFHFSLERVPRVPNSKKVEIKKYGDGLCRVVARYGFMEYPSIRQVFSLAQEKGLHFRLETTSFFLSREKIVTGLKSKMGLWRKKLFALMVRNALSATSYYDMPSGQVIEIGMQVQI.

12 consecutive transmembrane segments (helical) span residues 25–45 (ISLAALGVVFGDIGTSPLYAI), 62–82 (VLGVLSLIFWALVLIVSLKYL), 115–135 (WFLVGIGLFGASLLYGDGMIT), 149–169 (IIAPAFKDLVIPITVIILTGL), 180–200 (VGALFGPVILLWFAVIGVLGL), 227–247 (LQGFMVLGAVFLSVTGAEALY), 263–283 (ILFVLPALLLNYFGQGALLLF), 295–315 (LVPSWAMIPMVILATSATIIA), 352–372 (IYVPGANWALMYATIGLVIGF), 378–398 (LAAAYGVAVTATMLISTILFY), 410–430 (LATNLLVSFFFVIDLAFFGAS), and 434–454 (LFHGAWFPLVIGLVLFTLMLT).

The protein belongs to the HAK/KUP transporter (TC 2.A.72) family.

The protein resides in the cell inner membrane. The enzyme catalyses K(+)(in) + H(+)(in) = K(+)(out) + H(+)(out). Functionally, transport of potassium into the cell. Likely operates as a K(+):H(+) symporter. The polypeptide is Probable potassium transport system protein Kup (Chlorobium phaeobacteroides (strain DSM 266 / SMG 266 / 2430)).